The sequence spans 1349 residues: MEMGKAAAVVLAVNGKRYEAAGVDPSTTLLEFLRTHTPVRGPKLGCGEGGCGACVVLVSKYDPATDEVTEFSASSCLTLLHSVDRCSVTTSEGIGNTKDGYHPVQQRLSGFHASQCGFCTPGMCMSIFSALVKADKAANRPAPPAGFSKLTSSEAEKAVSGNLCRCTGYRPIVDACKSFAADVDLEDLGLNCFWKKGDEPADVSKLPGYNSGDVCTFPDFLKSEMKSSIQQANSAPVPVSDDGWYRPRSIDELHRLFQSSSFDENSVKIVASNTGSGVYKDQDLYDKYIDIKGIPELSVINRNDKGIELGSVVSISKAIEVLSDGNLVFRKIAGHLNKVASPFVRNTATIGGNIVMAQRLPFASDIATILLAAGSTVTIQVASKRLCFTLEEFLQQPPCDSRTLLLSIFIPEWGSNDVTFETFRAAPRPLGNAVSYVNSAFLARTSLDAASKDHLIEDICLAFGAYGADHAIRARKVEDYLKGKTVSSSVILEAVRLLKGSIKPSEGSTHPEYRISLAVSFLFTFLSSLANSLNESAKVSGTNEHSPEKQLKLDINDLPIRSRQEIFFTDAYKPVGKAIKKAGVEIQASGEAVYVDDIPAPKDCLYGAFIYSTHPHAHVKSINFKPSLASQKIITVITAKDIPSGGQNVGYSFPMIGEEALFADPVAEFAGQNIGVVIAQTQKYAYMAAKQAIIEYSTENLQPPILTIEDAIERSSFFQTLPFVAPKPVGDYDKGMSEADHKILSAEVKIESQYFFYMEPQVALAIPDEDNCITIYFSTQLPESTQNVVAKCVGIPFHNVRVITRRVGGGFGGKALKSMHVACACAVAALKLQRPVRMYLDRKTDMIMAGGRHPMKVKYSVGFKSNGKITALHLDLGINGGISPDMSPMIAAPVIGSLKKYNWGNLAFDTKVCKTNVSSKSSMRAPGDAQGSFIAEAIIEHVASALSADTNTIRRKNLHDFESLAVFFGDSAGEASTYSLVTMFDKLASSPEYQHRAEMVEQFNRSNKWKKRGISCVPVTYEVQLRPTPGKVSIMNDGSIAVEVGGVELGQGLWTKVKQMTAFGLGQLCPGGGESLLDKVRVIQADTLSMIQGGVTGGSTTSETSCEAVRKSCVALVESLKPIKENLEAKTGTVEWSALIAQASMASVNLSAHAYWTPDPTFTSYLNYGAGTSEVEIDVLTGATTILRSDLVYDCGQSLNPAVDLGQVEGAFVQGVGFFTNEEYATNSDGLVIHDGTWTYKIPTVDTIPKQFNVELINSARDQKRVLSSKASGEPPLLLASSVHCAMREAIRAARKEFSVCTGPANSAITFQMDVPATMPVVKELCGLDVVERYLESVSAASPTNTAKA.

The region spanning 7–94 is the 2Fe-2S ferredoxin-type domain; the sequence is AAVVLAVNGK…RCSVTTSEGI (88 aa). [2Fe-2S] cluster is bound by residues cysteine 46, cysteine 51, and cysteine 54. The FAD-binding PCMH-type domain maps to 237–415; the sequence is VPVSDDGWYR…LSIFIPEWGS (179 aa).

The protein belongs to the xanthine dehydrogenase family. As to quaternary structure, aldehyde oxidases (AO) are homodimers and heterodimers of AO subunits. [2Fe-2S] cluster serves as cofactor. It depends on FAD as a cofactor. The cofactor is Mo-molybdopterin. Mostly expressed in coleoptiles, and, to a lower extent, in mesocotyl and roots.

It localises to the cytoplasm. It carries out the reaction indole-3-acetaldehyde + O2 + H2O = (indol-3-yl)acetate + H2O2 + H(+). In higher plants aldehyde oxidases (AO) appear to be homo- and heterodimeric assemblies of AO subunits with probably different physiological functions. Involved in the biosynthesis of auxin. This is Indole-3-acetaldehyde oxidase (AO2) from Zea mays (Maize).